The sequence spans 860 residues: Leucine--tRNA ligase (860 aa).

A 'HIGH' region motif is present at residues 42–52 (PYPSGRLHMGH). Positions 619-623 (KMSKS) match the 'KMSKS' region motif. Lysine 622 is an ATP binding site.

The protein belongs to the class-I aminoacyl-tRNA synthetase family.

It is found in the cytoplasm. It carries out the reaction tRNA(Leu) + L-leucine + ATP = L-leucyl-tRNA(Leu) + AMP + diphosphate. This chain is Leucine--tRNA ligase, found in Shigella sonnei (strain Ss046).